A 383-amino-acid chain; its full sequence is TOM1-like protein 2 (383 aa).

One can recognise a VHS domain in the interval 45 to 178; that stretch reads ATLETLEEPN…GLHARGEENS (134 aa). Residues 223–310 enclose the GAT domain; the sequence is LSIKDKKEQI…VLSSYKKPDE (88 aa). Residues 305-383 form a disordered region; sequence YKKPDETEKK…LGLSSDEDEK (79 aa). Basic and acidic residues-rich tracts occupy residues 306–316 and 339–354; these read KKPDETEKKAS and EPVKKTGADDDKKHSE. Phosphoserine occurs at positions 377 and 378.

It belongs to the TOM1 family. As to expression, ubiquitously expressed.

Its subcellular location is the cytoplasm. The protein resides in the membrane. In terms of biological role, binds ubiquitin in vitro. Might contribute to the loading of the ESCRT machinery. The protein is TOM1-like protein 2 of Arabidopsis thaliana (Mouse-ear cress).